The sequence spans 63 residues: Ferredoxin (63 aa).

The 4Fe-4S ferredoxin-type domain occupies 3–31; the sequence is WKVSVDVDTCIGDAICASLCPDVFEMGDD. Cysteine 12, aspartate 15, and cysteine 18 together coordinate [4Fe-4S] cluster. A disulfide bond links cysteine 22 and cysteine 45. Cysteine 53 is a binding site for [4Fe-4S] cluster.

It depends on [4Fe-4S] cluster as a cofactor. The cofactor is [3Fe-4S] cluster.

Functionally, ferredoxins are iron-sulfur proteins that transfer electrons in a wide variety of metabolic reactions. In Thermococcus kodakarensis (strain ATCC BAA-918 / JCM 12380 / KOD1) (Pyrococcus kodakaraensis (strain KOD1)), this protein is Ferredoxin (fdxA).